The sequence spans 387 residues: Galactokinase (387 aa).

33–36 lines the substrate pocket; sequence EHTD. ATP is bound by residues Ser67 and 124–130; that span reads GSGLSSS. Mg(2+)-binding residues include Ser130 and Glu162. Asp174 acts as the Proton acceptor in catalysis. Substrate is bound at residue Tyr224.

This sequence belongs to the GHMP kinase family. GalK subfamily.

The protein localises to the cytoplasm. The catalysed reaction is alpha-D-galactose + ATP = alpha-D-galactose 1-phosphate + ADP + H(+). It functions in the pathway carbohydrate metabolism; galactose metabolism. In terms of biological role, catalyzes the transfer of the gamma-phosphate of ATP to D-galactose to form alpha-D-galactose-1-phosphate (Gal-1-P). In Ligilactobacillus salivarius (strain UCC118) (Lactobacillus salivarius), this protein is Galactokinase.